Reading from the N-terminus, the 430-residue chain is Sphingosine-1-phosphate phosphatase 1 (430 aa).

A disordered region spans residues 34 to 103 (SSPAADEDAE…AGSQRRNSLT (70 aa)). The residue at position 101 (Ser101) is a Phosphoserine. Thr103 carries the post-translational modification Phosphothreonine. Helical transmembrane passes span 121–141 (FCLGTELGNELFYILFFPFWI), 152–172 (LVIIWVLVMYLGQCTKDIIRW), 193–213 (MPSTHAMSGTAIPIAMFLLTY), and 216–236 (WQYPLIYGLILIPCWSSLVCL). Residues 167–175 (KDIIRWPRP) form a phosphatase sequence motif I region. The segment at 194-197 (PSTH) is phosphatase sequence motif II. Catalysis depends on His197, which acts as the Proton donor. The segment at 237 to 248 (SRIYMGMHSILD) is phosphatase sequence motif III. The Nucleophile role is filled by His244. Helical transmembrane passes span 246 to 266 (ILDVIAGFLYTILILIIFYPL), 279 to 299 (YAPLIIIGLHLILGIFSFTLD), 311 to 331 (ILGSGAGIACGSHAAYTLGLS), 348 to 368 (VTLFGKAILRIVLGMLLVLFV), and 409 to 429 (YGMVGFSITFLVPYVFSFIGI).

It belongs to the type 2 lipid phosphate phosphatase family. As to expression, highly expressed in liver and kidney. Expressed in epidermis, in the stratum granulosum and the stratum spinosum.

The protein localises to the endoplasmic reticulum membrane. It is found in the cell membrane. It carries out the reaction sphinganine 1-phosphate + H2O = sphinganine + phosphate. The catalysed reaction is sphing-4-enine 1-phosphate + H2O = sphing-4-enine + phosphate. With respect to regulation, inhibited by NaF, sodium orthovanadate, propanolol, and N-ethylmaleimide. In terms of biological role, specifically dephosphorylates sphingosine 1-phosphate (S1P), dihydro-S1P, and phyto-S1P. Does not act on ceramide 1-phosphate, lysophosphatidic acid or phosphatidic acid. Sphingosine-1-phosphate phosphatase activity is needed for efficient recycling of sphingosine into the sphingolipid synthesis pathway. Regulates the intracellular levels of the bioactive sphingolipid metabolite S1P that regulates diverse biological processes acting both as an extracellular receptor ligand or as an intracellular second messenger. Involved in efficient ceramide synthesis from exogenous sphingoid bases. Converts S1P to sphingosine, which is readily metabolized to ceramide via ceramide synthase. In concert with sphingosine kinase 2 (SphK2), recycles sphingosine into ceramide through a phosphorylation/dephosphorylation cycle. Regulates endoplasmic-to-Golgi trafficking of ceramides, resulting in the regulation of ceramide levels in the endoplasmic reticulum, preferentially long-chain ceramide species, and influences the anterograde membrane transport of both ceramide and proteins from the endoplasmic reticulum to the Golgi apparatus. The modulation of intracellular ceramide levels in turn regulates apoptosis. Via S1P levels, modulates resting tone, intracellular Ca(2+) and myogenic vasoconstriction in resistance arteries. Also involved in unfolded protein response (UPR) and ER stress-induced autophagy via regulation of intracellular S1P levels. Involved in the regulation of epidermal homeostasis and keratinocyte differentiation. This is Sphingosine-1-phosphate phosphatase 1 from Mus musculus (Mouse).